Reading from the N-terminus, the 295-residue chain is MTSTINKHLDGEGSVQVKQDPKVNIEEGALVIAVYGKGGIGKSTTSSNLSAAFSKLGKKVLQIGCDPKHDSTFTLTHKMVPTVIDILEEVDFHSEELRPTDFMFEGFNGVMCVESGGPPAGTGCGGYVTGQTVKLLKEHHLLEDTDVVIFDVLGDVVCGGFAAPLQHANYCLIVTANDFDSIFAMNRIVSAIKAKAKNYKVRLGGVVANRSKDTDQIDKFNDRTGLKTMAHFKDVDAIRRSRLKKCTIFEMEPTEDVIEVQNEYLSLAKNMLENVEPLEGTPLKDREIFDLLGFD.

ATP is bound by residues 39–44 and K68; that span reads GIGKST. S43 contributes to the Mg(2+) binding site. [4Fe-4S] cluster is bound by residues C124 and C158. 209–210 provides a ligand contact to ATP; sequence NR.

This sequence belongs to the NifH/BchL/ChlL family. As to quaternary structure, homodimer. Protochlorophyllide reductase is composed of three subunits; ChlL, ChlN and ChlB. [4Fe-4S] cluster is required as a cofactor.

The enzyme catalyses chlorophyllide a + oxidized 2[4Fe-4S]-[ferredoxin] + 2 ADP + 2 phosphate = protochlorophyllide a + reduced 2[4Fe-4S]-[ferredoxin] + 2 ATP + 2 H2O. It functions in the pathway porphyrin-containing compound metabolism; chlorophyll biosynthesis (light-independent). Its function is as follows. Component of the dark-operative protochlorophyllide reductase (DPOR) that uses Mg-ATP and reduced ferredoxin to reduce ring D of protochlorophyllide (Pchlide) to form chlorophyllide a (Chlide). This reaction is light-independent. The L component serves as a unique electron donor to the NB-component of the complex, and binds Mg-ATP. In Prochlorococcus marinus (strain MIT 9515), this protein is Light-independent protochlorophyllide reductase iron-sulfur ATP-binding protein.